The sequence spans 83 residues: Mitochondrial import inner membrane translocase subunit TIM10 (83 aa).

A2 is modified (N-acetylalanine). A Twin CX3C motif motif is present at residues 36–61 (CFNKCVDKRYKEAELNMGENSCIDRC). 2 disulfide bridges follow: C36–C61 and C40–C57.

The protein belongs to the small Tim family. Heterohexamer; composed of 3 copies of TIM9 and 3 copies of TIM10, named soluble 70 kDa complex. The complex associates with the TIM22 component of the TIM22 complex. Interacts with multi-pass transmembrane proteins in transit. As to expression, expressed in roots, flowers, young cotyledons and leaves.

It localises to the mitochondrion intermembrane space. Mitochondrial intermembrane chaperone that participates in the import and insertion of multi-pass transmembrane proteins into the mitochondrial inner membrane. May also be required for the transfer of beta-barrel precursors from the TOM complex to the sorting and assembly machinery (SAM complex) of the outer membrane. Acts as a chaperone-like protein that protects the hydrophobic precursors from aggregation and guide them through the mitochondrial intermembrane space. In Arabidopsis thaliana (Mouse-ear cress), this protein is Mitochondrial import inner membrane translocase subunit TIM10 (TIM10).